We begin with the raw amino-acid sequence, 277 residues long: Undecaprenyl-diphosphatase (277 aa).

Helical transmembrane passes span 47–67 (FNII…RGKI), 85–105 (VNLL…ADLI), 108–128 (WLFN…IMLW), 183–203 (AATE…AVYS), 218–238 (VFAV…RALL), and 249–269 (FAWY…FHLI).

This sequence belongs to the UppP family.

It is found in the cell inner membrane. The catalysed reaction is di-trans,octa-cis-undecaprenyl diphosphate + H2O = di-trans,octa-cis-undecaprenyl phosphate + phosphate + H(+). Catalyzes the dephosphorylation of undecaprenyl diphosphate (UPP). Confers resistance to bacitracin. This is Undecaprenyl-diphosphatase from Pseudomonas paraeruginosa (strain DSM 24068 / PA7) (Pseudomonas aeruginosa (strain PA7)).